A 134-amino-acid chain; its full sequence is Small ribosomal subunit protein uS9 (134 aa).

Residues 109 to 134 (DARRTEPHKPSKSSKGPRAKRQKSYR) are disordered. A compositionally biased stretch (basic residues) spans 118–134 (PSKSSKGPRAKRQKSYR).

It belongs to the universal ribosomal protein uS9 family.

The chain is Small ribosomal subunit protein uS9 from Methanococcus maripaludis (strain DSM 14266 / JCM 13030 / NBRC 101832 / S2 / LL).